The following is a 335-amino-acid chain: DNA-directed RNA polymerase subunit alpha (335 aa).

The tract at residues 1-233 (MMLNATEFLT…QQISIFVDLE (233 aa)) is alpha N-terminal domain (alpha-NTD). The segment at 247-335 (VDPVLLRPVD…VDDRFSYRSR (89 aa)) is alpha C-terminal domain (alpha-CTD).

It belongs to the RNA polymerase alpha chain family. Homodimer. The RNAP catalytic core consists of 2 alpha, 1 beta, 1 beta' and 1 omega subunit. When a sigma factor is associated with the core the holoenzyme is formed, which can initiate transcription.

The enzyme catalyses RNA(n) + a ribonucleoside 5'-triphosphate = RNA(n+1) + diphosphate. Its function is as follows. DNA-dependent RNA polymerase catalyzes the transcription of DNA into RNA using the four ribonucleoside triphosphates as substrates. The chain is DNA-directed RNA polymerase subunit alpha from Psychrobacter arcticus (strain DSM 17307 / VKM B-2377 / 273-4).